Consider the following 337-residue polypeptide: Ribonucleoside-diphosphate reductase small chain (337 aa).

Fe cation-binding residues include aspartate 85, glutamate 116, and histidine 119. The active site involves tyrosine 123. Positions 178, 212, and 215 each coordinate Fe cation.

This sequence belongs to the ribonucleoside diphosphate reductase small chain family. Heterodimer of a large and a small subunit. It depends on Fe cation as a cofactor.

The enzyme catalyses a 2'-deoxyribonucleoside 5'-diphosphate + [thioredoxin]-disulfide + H2O = a ribonucleoside 5'-diphosphate + [thioredoxin]-dithiol. Functionally, provides the precursors necessary for DNA synthesis. Catalyzes the biosynthesis of deoxyribonucleotides from the corresponding ribonucleotides. This chain is Ribonucleoside-diphosphate reductase small chain (RNR2), found in Trypanosoma brucei brucei.